The chain runs to 77 residues: Putative defensin-like protein 187 (77 aa).

The signal sequence occupies residues 1–19; that stretch reads MKNSSIMFVLIVVFLISSS. 3 cysteine pairs are disulfide-bonded: cysteine 31–cysteine 77, cysteine 43–cysteine 71, and cysteine 47–cysteine 73.

It belongs to the DEFL family.

Its subcellular location is the secreted. This is Putative defensin-like protein 187 (LCR42) from Arabidopsis thaliana (Mouse-ear cress).